Here is a 475-residue protein sequence, read N- to C-terminus: ATP synthase subunit beta (475 aa).

Position 152-159 (152-159) interacts with ATP; the sequence is GGAGVGKT.

This sequence belongs to the ATPase alpha/beta chains family. In terms of assembly, F-type ATPases have 2 components, CF(1) - the catalytic core - and CF(0) - the membrane proton channel. CF(1) has five subunits: alpha(3), beta(3), gamma(1), delta(1), epsilon(1). CF(0) has four main subunits: a(1), b(1), b'(1) and c(9-12).

It is found in the cell inner membrane. It catalyses the reaction ATP + H2O + 4 H(+)(in) = ADP + phosphate + 5 H(+)(out). Its function is as follows. Produces ATP from ADP in the presence of a proton gradient across the membrane. The catalytic sites are hosted primarily by the beta subunits. In Cereibacter sphaeroides (strain ATCC 17025 / ATH 2.4.3) (Rhodobacter sphaeroides), this protein is ATP synthase subunit beta.